A 72-amino-acid chain; its full sequence is Translation initiation factor IF-1 (72 aa).

Residues 1-72 enclose the S1-like domain; that stretch reads MSKQSSIEQD…TKGRIVFRYK (72 aa).

This sequence belongs to the IF-1 family. In terms of assembly, component of the 30S ribosomal translation pre-initiation complex which assembles on the 30S ribosome in the order IF-2 and IF-3, IF-1 and N-formylmethionyl-tRNA(fMet); mRNA recruitment can occur at any time during PIC assembly.

It is found in the cytoplasm. In terms of biological role, one of the essential components for the initiation of protein synthesis. Stabilizes the binding of IF-2 and IF-3 on the 30S subunit to which N-formylmethionyl-tRNA(fMet) subsequently binds. Helps modulate mRNA selection, yielding the 30S pre-initiation complex (PIC). Upon addition of the 50S ribosomal subunit IF-1, IF-2 and IF-3 are released leaving the mature 70S translation initiation complex. This chain is Translation initiation factor IF-1, found in Cytophaga hutchinsonii (strain ATCC 33406 / DSM 1761 / CIP 103989 / NBRC 15051 / NCIMB 9469 / D465).